Reading from the N-terminus, the 193-residue chain is Large ribosomal subunit protein bL25 (193 aa).

It belongs to the bacterial ribosomal protein bL25 family. CTC subfamily. As to quaternary structure, part of the 50S ribosomal subunit; part of the 5S rRNA/L5/L18/L25 subcomplex. Contacts the 5S rRNA. Binds to the 5S rRNA independently of L5 and L18.

Functionally, this is one of the proteins that binds to the 5S RNA in the ribosome where it forms part of the central protuberance. The protein is Large ribosomal subunit protein bL25 of Clostridium tetani (strain Massachusetts / E88).